Consider the following 146-residue polypeptide: MPELTRRRALGAAAVVAAGVPLVALPAARADDRGHHTPEVPGNPAASGAPAAFDEIYKGRRIQGRTVTDGGGHHGGGHGGDGHGGGHHGGGYAVFVDGVELHVMRNADGSWISVVSHYEPVDTPRAAARAAVDELQGARLLPFPSN.

A signal peptide (tat-type signal) is located at residues M1–A30. The tract at residues R65–G85 is disordered. The segment covering D69–G85 has biased composition (gly residues).

The protein belongs to the melC1 family. In terms of processing, predicted to be exported by the Tat system. The position of the signal peptide cleavage has not been experimentally proven.

Its function is as follows. This protein may function to deliver copper to tyrosinase. The protein is Tyrosinase cofactor (melC1) of Streptomyces antibioticus.